We begin with the raw amino-acid sequence, 617 residues long: MNKYPLLSLINSPDDLRLLSKDKLPQLCQELRSYLLESVSQSSGHLASGLGTVELTVALHYVFKTPFDQLLWDVGHQAYPHKILTGRRDKMSTIRQKGGLHPFPWREESEFDVLSVGHSSTSISAGLGIAIAAQKENLGRKTICVIGDGAITAGMAFEALNHAGSVHTDMLVILNDNEMSISENVGALNNHLARLLSGSIYSTLRESGKKILSGLPPIKEFVKKTEEHVKGFVSPVGTLFEQLGFNYIGPIDGHNIHELISTLKNMQSLSGPQFLHIKTKKGKGYAPAEKDPIGFHGVPKFDHKLGELPKSSTTPTYSQIFGSWLCEIAVQDEKLIGITPAMREGSGMVEFSQQFPQQYFDVAIAEQHAVTFAAGLAIAGYKPVVAIYSTFLQRAYDQLIHDVAIQNLPVLFAIDRAGIVGADGQTHQGAFDLSFMRCIPNLVIMTPSNENECRQMLYTGYKCGKPAAVRYPRGNAIGVKLEPLAELPLGKSKLIRQGKNIAILNFGTLLSEATKVAEDLDATVVDMRFVKPLDTQRIQEIAQTHSLIVTLEENAIQGGAGSAVAETLYQQQQKVSLLQLGLPDNFIPQGTQKEMLAELKLNAEGIFEQIKQFLQKI.

Residues His76 and 117 to 119 (GHS) contribute to the thiamine diphosphate site. Residue Asp148 coordinates Mg(2+). Thiamine diphosphate is bound by residues 149 to 150 (GA), Asn177, Tyr285, and Glu366. Residue Asn177 participates in Mg(2+) binding.

This sequence belongs to the transketolase family. DXPS subfamily. As to quaternary structure, homodimer. Mg(2+) is required as a cofactor. Thiamine diphosphate serves as cofactor.

It catalyses the reaction D-glyceraldehyde 3-phosphate + pyruvate + H(+) = 1-deoxy-D-xylulose 5-phosphate + CO2. The protein operates within metabolic intermediate biosynthesis; 1-deoxy-D-xylulose 5-phosphate biosynthesis; 1-deoxy-D-xylulose 5-phosphate from D-glyceraldehyde 3-phosphate and pyruvate: step 1/1. Catalyzes the acyloin condensation reaction between C atoms 2 and 3 of pyruvate and glyceraldehyde 3-phosphate to yield 1-deoxy-D-xylulose-5-phosphate (DXP). This Histophilus somni (strain 129Pt) (Haemophilus somnus) protein is 1-deoxy-D-xylulose-5-phosphate synthase.